The sequence spans 436 residues: UPF0597 protein YhaM (436 aa).

It belongs to the UPF0597 family.

The protein is UPF0597 protein YhaM of Shigella flexneri serotype 5b (strain 8401).